A 387-amino-acid chain; its full sequence is Apoptosis-inducing factor homolog B (387 aa).

Residues 12 to 16 (GGGYG), arginine 47, and aspartate 292 contribute to the FAD site.

This sequence belongs to the FAD-dependent oxidoreductase family. Requires FAD as cofactor.

Its function is as follows. Putative FAD-dependent oxidoreductase. The sequence is that of Apoptosis-inducing factor homolog B (aifB) from Dictyostelium discoideum (Social amoeba).